The sequence spans 87 residues: Small ribosomal subunit protein bS16 (87 aa).

Belongs to the bacterial ribosomal protein bS16 family.

This Nitrosospira multiformis (strain ATCC 25196 / NCIMB 11849 / C 71) protein is Small ribosomal subunit protein bS16.